The primary structure comprises 447 residues: Na(+)-translocating NADH-quinone reductase subunit A (447 aa).

Belongs to the NqrA family. Composed of six subunits; NqrA, NqrB, NqrC, NqrD, NqrE and NqrF.

It carries out the reaction a ubiquinone + n Na(+)(in) + NADH + H(+) = a ubiquinol + n Na(+)(out) + NAD(+). In terms of biological role, NQR complex catalyzes the reduction of ubiquinone-1 to ubiquinol by two successive reactions, coupled with the transport of Na(+) ions from the cytoplasm to the periplasm. NqrA to NqrE are probably involved in the second step, the conversion of ubisemiquinone to ubiquinol. The polypeptide is Na(+)-translocating NADH-quinone reductase subunit A (Klebsiella pneumoniae (strain 342)).